The chain runs to 207 residues: Large ribosomal subunit protein uL3 (207 aa).

Belongs to the universal ribosomal protein uL3 family. In terms of assembly, part of the 50S ribosomal subunit. Forms a cluster with proteins L14 and L19.

In terms of biological role, one of the primary rRNA binding proteins, it binds directly near the 3'-end of the 23S rRNA, where it nucleates assembly of the 50S subunit. The chain is Large ribosomal subunit protein uL3 from Fervidobacterium nodosum (strain ATCC 35602 / DSM 5306 / Rt17-B1).